We begin with the raw amino-acid sequence, 378 residues long: Tetraacyldisaccharide 4'-kinase (378 aa).

63 to 70 serves as a coordination point for ATP; sequence AVGGAGKT.

Belongs to the LpxK family.

The enzyme catalyses a lipid A disaccharide + ATP = a lipid IVA + ADP + H(+). It functions in the pathway glycolipid biosynthesis; lipid IV(A) biosynthesis; lipid IV(A) from (3R)-3-hydroxytetradecanoyl-[acyl-carrier-protein] and UDP-N-acetyl-alpha-D-glucosamine: step 6/6. Its function is as follows. Transfers the gamma-phosphate of ATP to the 4'-position of a tetraacyldisaccharide 1-phosphate intermediate (termed DS-1-P) to form tetraacyldisaccharide 1,4'-bis-phosphate (lipid IVA). The polypeptide is Tetraacyldisaccharide 4'-kinase (Anaeromyxobacter sp. (strain K)).